Here is a 662-residue protein sequence, read N- to C-terminus: Rap guanine nucleotide exchange factor-like 1 (662 aa).

Positions 1–149 (MKPLEKFLKK…PPWAPLGAPE (149 aa)) are disordered. The span at 20–48 (VTGGPGGGPGCCGGPGGGGGPGGGGGPAG) shows a compositional bias: gly residues. Low complexity-rich tracts occupy residues 49-65 (GLRP…LLLP) and 116-133 (SGVP…ELSP). One can recognise a Ras-GEF domain in the interval 424-660 (EPEDVANHLT…FELSYKLEAN (237 aa)).

Functionally, probable guanine nucleotide exchange factor (GEF). In Mus musculus (Mouse), this protein is Rap guanine nucleotide exchange factor-like 1 (Rapgefl1).